The chain runs to 216 residues: Glycerol-3-phosphate acyltransferase (216 aa).

The next 6 membrane-spanning stretches (helical) occupy residues 3 to 23, 48 to 68, 82 to 102, 112 to 132, 142 to 162, and 166 to 186; these read FPIF…YWIA, IGWK…MLPV, FQLL…FLGF, FGVF…VFWV, LGSI…TILL, and EVSY…ILTH.

It belongs to the PlsY family. As to quaternary structure, probably interacts with PlsX.

It is found in the cell inner membrane. The catalysed reaction is an acyl phosphate + sn-glycerol 3-phosphate = a 1-acyl-sn-glycero-3-phosphate + phosphate. It functions in the pathway lipid metabolism; phospholipid metabolism. In terms of biological role, catalyzes the transfer of an acyl group from acyl-phosphate (acyl-PO(4)) to glycerol-3-phosphate (G3P) to form lysophosphatidic acid (LPA). This enzyme utilizes acyl-phosphate as fatty acyl donor, but not acyl-CoA or acyl-ACP. The chain is Glycerol-3-phosphate acyltransferase from Leptospira interrogans serogroup Icterohaemorrhagiae serovar Lai (strain 56601).